The primary structure comprises 397 residues: Chorismate synthase (397 aa).

NADP(+) is bound by residues arginine 40 and arginine 46. Residues 129 to 131, 257 to 258, glycine 302, 317 to 321, and arginine 343 contribute to the FMN site; these read RSS, QA, and KPISS.

This sequence belongs to the chorismate synthase family. In terms of assembly, homotetramer. FMNH2 serves as cofactor.

It carries out the reaction 5-O-(1-carboxyvinyl)-3-phosphoshikimate = chorismate + phosphate. It participates in metabolic intermediate biosynthesis; chorismate biosynthesis; chorismate from D-erythrose 4-phosphate and phosphoenolpyruvate: step 7/7. Catalyzes the anti-1,4-elimination of the C-3 phosphate and the C-6 proR hydrogen from 5-enolpyruvylshikimate-3-phosphate (EPSP) to yield chorismate, which is the branch point compound that serves as the starting substrate for the three terminal pathways of aromatic amino acid biosynthesis. This reaction introduces a second double bond into the aromatic ring system. This chain is Chorismate synthase, found in Chlorobaculum tepidum (strain ATCC 49652 / DSM 12025 / NBRC 103806 / TLS) (Chlorobium tepidum).